Consider the following 333-residue polypeptide: T-cell surface glycoprotein CD1c (333 aa).

The N-terminal stretch at 1 to 17 (MLFLQFLLLALLLPGGD) is a signal peptide. The Extracellular portion of the chain corresponds to 18–302 (NADASQEHVS…ILYWGHHFSM (285 aa)). N-linked (GlcNAc...) asparagine glycosylation is found at Asn-38, Asn-70, Asn-75, and Asn-146. 2 cysteine pairs are disulfide-bonded: Cys-120/Cys-185 and Cys-225/Cys-280. One can recognise an Ig-like domain in the interval 206–296 (PEAWLSSRPS…LGGQDIILYW (91 aa)). The chain crosses the membrane as a helical span at residues 303–323 (NWIALVVIVPLVILIVLVLWF). The Cytoplasmic portion of the chain corresponds to 324 to 333 (KKHCSYQDIL). Positions 329-332 (YQDI) match the Internalization signal motif.

As to quaternary structure, heterodimer with B2M (beta-2-microglobulin). As to expression, expressed on cortical thymocytes, on certain T-cell leukemias, and in various other tissues.

Its subcellular location is the cell membrane. The protein localises to the endosome membrane. The protein resides in the lysosome. Functionally, antigen-presenting protein that binds self and non-self lipid and glycolipid antigens and presents them to T-cell receptors on natural killer T-cells. This Homo sapiens (Human) protein is T-cell surface glycoprotein CD1c (CD1C).